Here is a 198-residue protein sequence, read N- to C-terminus: Recombination protein RecR (198 aa).

A C4-type zinc finger spans residues 57 to 72; it reads CRVCANIADENPCGIC. The 96-residue stretch at 80–175 folds into the Toprim domain; the sequence is GLICVVERPR…RVTRLAFGLP (96 aa).

The protein belongs to the RecR family.

May play a role in DNA repair. It seems to be involved in an RecBC-independent recombinational process of DNA repair. It may act with RecF and RecO. This chain is Recombination protein RecR, found in Desulforudis audaxviator (strain MP104C).